The chain runs to 96 residues: Acylphosphatase (96 aa).

The Acylphosphatase-like domain maps to 9-96 (CAEIYVSGRV…DTFTDFFIKR (88 aa)). Residues Arg24 and Asn42 contribute to the active site.

Belongs to the acylphosphatase family.

It carries out the reaction an acyl phosphate + H2O = a carboxylate + phosphate + H(+). The chain is Acylphosphatase (acyP) from Methanococcoides burtonii (strain DSM 6242 / NBRC 107633 / OCM 468 / ACE-M).